The sequence spans 638 residues: Growth hormone receptor (638 aa).

A signal peptide spans 1–18 (MDLWQLLLTLAVAGSGNA). Over 19–264 (VSGSEATPAI…SPFACEEDFQ (246 aa)) the chain is Extracellular. Cystine bridges form between Cys56-Cys66 and Cys101-Cys112. Asn115 carries an N-linked (GlcNAc...) asparagine glycan. Cys126 and Cys140 are oxidised to a cystine. A Fibronectin type-III domain is found at 151 to 254 (PPIGLNWTLL…EVLYVALPQM (104 aa)). N-linked (GlcNAc...) asparagine glycans are attached at residues Asn156, Asn161, and Asn200. The WSXWS motif motif lies at 240 to 244 (YGEFS). Residues 265-288 (FPWFLIIIFGIFGLTMILFLFIFS) traverse the membrane as a helical segment. The Cytoplasmic segment spans residues 289 to 638 (KQQRIKMLIL…STDQLNKIMP (350 aa)). Positions 294 to 379 (KMLILPPVPV…HEKSLNILGA (86 aa)) are required for JAK2 binding. The Box 1 motif motif lies at 297-305 (ILPPVPVPK). Positions 340-349 (DSWVEFIELD) match the UbE motif motif. Residue Ser341 is modified to Phosphoserine. The span at 429–446 (KNQSNSPSTDTAPNTQQP) shows a compositional bias: polar residues. Positions 429-448 (KNQSNSPSTDTAPNTQQPGV) are disordered. 2 positions are modified to phosphotyrosine: Tyr487 and Tyr595.

Belongs to the type I cytokine receptor family. Type 1 subfamily. As to quaternary structure, on growth hormone (GH) binding, forms homodimers and binds JAK2 via a box 1-containing domain. In terms of processing, the soluble form (GHBP) is produced by phorbol ester-promoted proteolytic cleavage at the cell surface (shedding) by ADAM17/TACE. Shedding is inhibited by growth hormone (GH) binding to the receptor probably due to a conformational change in GHR rendering the receptor inaccessible to ADAM17. Post-translationally, on GH binding, phosphorylated on tyrosine residues in the cytoplasmic domain by JAK2. Ubiquitinated by the ECS(SOCS2) complex following ligand-binding and phosphorylation by JAK2, leading to its degradation by the proteasome. Regulation by the ECS(SOCS2) complex acts as a negative feedback loop of growth hormone receptor signaling. Ubiquitination is not sufficient for GHR internalization.

Its subcellular location is the cell membrane. It is found in the secreted. Its function is as follows. Receptor for pituitary gland growth hormone (GH1) involved in regulating postnatal body growth. On ligand binding, couples to the JAK2/STAT5 pathway. In terms of biological role, the soluble form (GHBP) acts as a reservoir of growth hormone in plasma and may be a modulator/inhibitor of GH signaling. In Ailuropoda melanoleuca (Giant panda), this protein is Growth hormone receptor (GHR).